The sequence spans 200 residues: MLTALLAVLGGYLLGSIPTGYWVGRWWGGIDIRQQGSGSTGATNVLRTLGKGPALLVLLVDAAKGAAAVALGSALGSAWWVVLAALFAVIGHSRSCWLGFRGGKSVATSLGILLAMAWPVALTTFGVWLLGLALTRIVSFSSLLAAVAAPVVMWATAQPLPYLLFALAGGVYVIGAHRRNIERLLAGSEPRIGQKWTQSP.

The next 4 helical transmembrane spans lie at Ala4–Gly24, Ala70–Ile90, Leu110–Leu130, and Gln158–Arg178.

The protein belongs to the PlsY family. In terms of assembly, probably interacts with PlsX.

It localises to the cell inner membrane. The enzyme catalyses an acyl phosphate + sn-glycerol 3-phosphate = a 1-acyl-sn-glycero-3-phosphate + phosphate. It functions in the pathway lipid metabolism; phospholipid metabolism. Its function is as follows. Catalyzes the transfer of an acyl group from acyl-phosphate (acyl-PO(4)) to glycerol-3-phosphate (G3P) to form lysophosphatidic acid (LPA). This enzyme utilizes acyl-phosphate as fatty acyl donor, but not acyl-CoA or acyl-ACP. This is Glycerol-3-phosphate acyltransferase from Synechococcus sp. (strain JA-2-3B'a(2-13)) (Cyanobacteria bacterium Yellowstone B-Prime).